Here is a 595-residue protein sequence, read N- to C-terminus: Elongation factor 4 (595 aa).

Positions 2–184 constitute a tr-type G domain; the sequence is KNIRNFSIIA…QIVEKIPAPK (183 aa). Residues 14–19 and 131–134 contribute to the GTP site; these read DHGKST and NKID.

Belongs to the TRAFAC class translation factor GTPase superfamily. Classic translation factor GTPase family. LepA subfamily.

It localises to the cell inner membrane. It carries out the reaction GTP + H2O = GDP + phosphate + H(+). Its function is as follows. Required for accurate and efficient protein synthesis under certain stress conditions. May act as a fidelity factor of the translation reaction, by catalyzing a one-codon backward translocation of tRNAs on improperly translocated ribosomes. Back-translocation proceeds from a post-translocation (POST) complex to a pre-translocation (PRE) complex, thus giving elongation factor G a second chance to translocate the tRNAs correctly. Binds to ribosomes in a GTP-dependent manner. The chain is Elongation factor 4 from Ruthia magnifica subsp. Calyptogena magnifica.